A 1332-amino-acid polypeptide reads, in one-letter code: Delta-poly-L-ornithine synthetase (1332 aa).

Positions 217, 221, and 304 each coordinate L-ornithine. 4 residues coordinate D-ornithine: Glu-221, Thr-304, Gly-306, and Thr-308. Residues Val-312 and Ser-313 each coordinate L-ornithine. Ser-313 contributes to the D-ornithine binding site. In terms of domain architecture, Carrier spans 524 to 601; sequence QPQNPAEEIL…AIAALMLEQP (78 aa). Ser-560 carries the O-(pantetheine 4'-phosphoryl)serine modification. Transmembrane regions (helical) follow at residues 629–649, 664–684, 868–888, 908–928, 1120–1140, and 1151–1171; these read LVTIPVLISINILQWLAPFFT, AIALSLLVYVSVIMSSFVLSI, VSALIIACLFFIPIFPSFLLV, LYYFILAIPASAMMMMITAVI, IVLPAALAIGVGYMIVLDVID, and LVALTLAGLLYGVGCFLIVAL.

It belongs to the ATP-dependent AMP-binding enzyme family. Requires pantetheine 4'-phosphate as cofactor.

It is found in the cell membrane. It catalyses the reaction n L-ornithine + n ATP + H2O = N(5)-(L-ornithyl)-[N(5)-(L-ornithyl)]n-1 + n AMP + n diphosphate + n H(+). It carries out the reaction n D-ornithine + n ATP + H2O = N(5)-(D-ornithyl)-[N(5)-(D-ornithyl)]n-1 + n AMP + n diphosphate + n H(+). Catalyzes the polymerization of L-ornithine, generating poly-L-ornithine composed of 7-12 amino acid units joined via isopeptide bonds between the carboxylate and the side chain amine. This polymer exhibits potent antifungal activity and thus may have a potential role in survival benefit for A.baumannii. The reaction occurs via ATP-dependent adenylation of the substrate. Can also adenylate D-ornithine with similar efficiency and thus may produce D-ornithine polymers. The protein is Delta-poly-L-ornithine synthetase of Acinetobacter baumannii (strain AB307-0294).